A 491-amino-acid chain; its full sequence is Probable cytosol aminopeptidase (491 aa).

Positions 261 and 266 each coordinate Mn(2+). Residue K273 is part of the active site. D284, D343, and E345 together coordinate Mn(2+). Residue R347 is part of the active site.

It belongs to the peptidase M17 family. Mn(2+) serves as cofactor.

It is found in the cytoplasm. The enzyme catalyses Release of an N-terminal amino acid, Xaa-|-Yaa-, in which Xaa is preferably Leu, but may be other amino acids including Pro although not Arg or Lys, and Yaa may be Pro. Amino acid amides and methyl esters are also readily hydrolyzed, but rates on arylamides are exceedingly low.. It catalyses the reaction Release of an N-terminal amino acid, preferentially leucine, but not glutamic or aspartic acids.. Its function is as follows. Presumably involved in the processing and regular turnover of intracellular proteins. Catalyzes the removal of unsubstituted N-terminal amino acids from various peptides. The sequence is that of Probable cytosol aminopeptidase from Geobacter sp. (strain M21).